A 375-amino-acid chain; its full sequence is Alanine racemase (375 aa).

Residue Lys-41 is the Proton acceptor; specific for D-alanine of the active site. Position 41 is an N6-(pyridoxal phosphate)lysine (Lys-41). Position 141 (Arg-141) interacts with substrate. The Proton acceptor; specific for L-alanine role is filled by Tyr-270. Met-317 contributes to the substrate binding site.

This sequence belongs to the alanine racemase family. It depends on pyridoxal 5'-phosphate as a cofactor.

The enzyme catalyses L-alanine = D-alanine. It participates in amino-acid biosynthesis; D-alanine biosynthesis; D-alanine from L-alanine: step 1/1. In terms of biological role, catalyzes the interconversion of L-alanine and D-alanine. May also act on other amino acids. The polypeptide is Alanine racemase (alr) (Lactiplantibacillus plantarum (strain ATCC BAA-793 / NCIMB 8826 / WCFS1) (Lactobacillus plantarum)).